A 146-amino-acid polypeptide reads, in one-letter code: Acidic phospholipase A2 S14-72F (146 aa).

The N-terminal stretch at 1–19 (MYPAHLLVLLAVCVSLLGA) is a signal peptide. Positions 20-27 (ASIPPQPL) are excised as a propeptide. Disulfide bonds link Cys-38/Cys-98, Cys-54/Cys-145, Cys-56/Cys-72, Cys-71/Cys-126, Cys-78/Cys-119, Cys-87/Cys-112, and Cys-105/Cys-117. The Ca(2+) site is built by Tyr-55, Gly-57, and Gly-59. His-75 is an active-site residue. Position 76 (Asp-76) interacts with Ca(2+). Residue Asp-120 is part of the active site.

This sequence belongs to the phospholipase A2 family. Group I subfamily. D49 sub-subfamily. Ca(2+) is required as a cofactor. As to expression, expressed by the venom gland.

It localises to the secreted. The catalysed reaction is a 1,2-diacyl-sn-glycero-3-phosphocholine + H2O = a 1-acyl-sn-glycero-3-phosphocholine + a fatty acid + H(+). Snake venom phospholipase A2 (PLA2) that inhibits collagen-induced platelet aggregation. PLA2 catalyzes the calcium-dependent hydrolysis of the 2-acyl groups in 3-sn-phosphoglycerides. This is Acidic phospholipase A2 S14-72F from Austrelaps superbus (Lowland copperhead snake).